We begin with the raw amino-acid sequence, 274 residues long: N-acetylmuramic acid 6-phosphate etherase (274 aa).

One can recognise an SIS domain in the interval 52–215 (IVPRMEQGGR…STSIMIRLGR (164 aa)). The active-site Proton donor is the Glu-80. The active site involves Glu-111.

Belongs to the GCKR-like family. MurNAc-6-P etherase subfamily. Homodimer.

It catalyses the reaction N-acetyl-D-muramate 6-phosphate + H2O = N-acetyl-D-glucosamine 6-phosphate + (R)-lactate. It functions in the pathway amino-sugar metabolism; N-acetylmuramate degradation. Functionally, specifically catalyzes the cleavage of the D-lactyl ether substituent of MurNAc 6-phosphate, producing GlcNAc 6-phosphate and D-lactate. This is N-acetylmuramic acid 6-phosphate etherase from Porphyromonas gingivalis (strain ATCC 33277 / DSM 20709 / CIP 103683 / JCM 12257 / NCTC 11834 / 2561).